The following is a 285-amino-acid chain: Shikimate dehydrogenase (NADP(+)) (285 aa).

Shikimate-binding positions include 20-22 (SRS) and threonine 67. The active-site Proton acceptor is lysine 71. Shikimate-binding residues include asparagine 93 and aspartate 108. Residues 132–136 (GAGGA) and methionine 224 each bind NADP(+). Tyrosine 226 serves as a coordination point for shikimate. Glycine 248 lines the NADP(+) pocket.

Belongs to the shikimate dehydrogenase family. Homodimer.

The catalysed reaction is shikimate + NADP(+) = 3-dehydroshikimate + NADPH + H(+). It functions in the pathway metabolic intermediate biosynthesis; chorismate biosynthesis; chorismate from D-erythrose 4-phosphate and phosphoenolpyruvate: step 4/7. In terms of biological role, involved in the biosynthesis of the chorismate, which leads to the biosynthesis of aromatic amino acids. Catalyzes the reversible NADPH linked reduction of 3-dehydroshikimate (DHSA) to yield shikimate (SA). In Bordetella avium (strain 197N), this protein is Shikimate dehydrogenase (NADP(+)).